The following is a 380-amino-acid chain: Bifunctional dihydropteroate synthase/dihydropteroate reductase (380 aa).

The dihydropteroate reductase stretch occupies residues Met-1–Ala-104. Residues Gln-105 to Asp-380 are dihydropteroate synthase. In terms of domain architecture, Pterin-binding spans Pro-119–Lys-371. Asn-126 contributes to the Mg(2+) binding site. Residues Asp-202, Asn-221, Asp-289, Lys-325, and Arg-359–His-361 contribute to the (7,8-dihydropterin-6-yl)methyl diphosphate site.

In the C-terminal section; belongs to the DHPS family. The cofactor is FAD. FMN serves as cofactor. Requires Mg(2+) as cofactor.

It catalyses the reaction (7,8-dihydropterin-6-yl)methyl diphosphate + 4-aminobenzoate = 7,8-dihydropteroate + diphosphate. The enzyme catalyses (6S)-5,6,7,8-tetrahydropteroate + NAD(+) = 7,8-dihydropteroate + NADH + H(+). It participates in cofactor biosynthesis; tetrahydrofolate biosynthesis; 7,8-dihydrofolate from 2-amino-4-hydroxy-6-hydroxymethyl-7,8-dihydropteridine diphosphate and 4-aminobenzoate: step 1/2. Functionally, bifunctional enzyme that catalyzes the formation of dihydropteroate, the immediate precursor of folic acid and the reduction of dihydropteroate to tetrahydropteroate. This is Bifunctional dihydropteroate synthase/dihydropteroate reductase from Helicobacter pylori (strain ATCC 700392 / 26695) (Campylobacter pylori).